A 432-amino-acid chain; its full sequence is Serine hydroxymethyltransferase 1 (432 aa).

(6S)-5,6,7,8-tetrahydrofolate contacts are provided by residues Leu-131 and 135 to 137 (GHL). Lys-240 bears the N6-(pyridoxal phosphate)lysine mark.

Belongs to the SHMT family. As to quaternary structure, homodimer. Pyridoxal 5'-phosphate is required as a cofactor.

It is found in the cytoplasm. The catalysed reaction is (6R)-5,10-methylene-5,6,7,8-tetrahydrofolate + glycine + H2O = (6S)-5,6,7,8-tetrahydrofolate + L-serine. It participates in one-carbon metabolism; tetrahydrofolate interconversion. The protein operates within amino-acid biosynthesis; glycine biosynthesis; glycine from L-serine: step 1/1. Functionally, catalyzes the reversible interconversion of serine and glycine with tetrahydrofolate (THF) serving as the one-carbon carrier. This reaction serves as the major source of one-carbon groups required for the biosynthesis of purines, thymidylate, methionine, and other important biomolecules. Also exhibits THF-independent aldolase activity toward beta-hydroxyamino acids, producing glycine and aldehydes, via a retro-aldol mechanism. In Rhodopseudomonas palustris (strain ATCC BAA-98 / CGA009), this protein is Serine hydroxymethyltransferase 1.